Reading from the N-terminus, the 496-residue chain is Probable G-protein coupled receptor Mth-like 5 (496 aa).

Residues 1–219 (MLVKTLGAHF…SNFLLRKILN (219 aa)) are Extracellular-facing. Residue N82 is glycosylated (N-linked (GlcNAc...) asparagine). Residues 220 to 240 (PIFHGISLVILLVIAIIYFIL) form a helical membrane-spanning segment. Residues 241 to 246 (PTLRDL) lie on the Cytoplasmic side of the membrane. Residues 247-267 (VGNIVTTIAMCLMVSQAADLV) form a helical membrane-spanning segment. Topologically, residues 268 to 276 (RIFTELTSH) are extracellular. A helical transmembrane segment spans residues 277–297 (VSFIVADIILCFSLLAAFFWL). The Cytoplasmic segment spans residues 298–327 (NSFGFYIWKTFRSRNVFLRVTDGRKYCYYS). The helical transmembrane segment at 328–348 (AYAWGCTATMAALAVFAHFFL) threads the bilayer. The Extracellular portion of the chain corresponds to 349–366 (DAESYKQEHMVGEQETIG). Residues 367–387 (WLGICIFFAPIACTILVNIFF) traverse the membrane as a helical segment. Residues 388–411 (YVTTRKLINRRTVYGRIAHKLKAN) lie on the Cytoplasmic side of the membrane. Residues 412–432 (FIMFSLMLLVMSIAWLFLIMS) form a helical membrane-spanning segment. The Extracellular segment spans residues 433 to 438 (WLQMEG). A helical membrane pass occupies residues 439–459 (LLYAHIVVNALQTPLLLYICV). The Cytoplasmic portion of the chain corresponds to 460 to 496 (LRQRHVTFLLKKTCCYNEPPSANDWGDELHYMNGNDY).

The protein belongs to the G-protein coupled receptor 2 family. Mth subfamily.

It localises to the cell membrane. This Drosophila melanogaster (Fruit fly) protein is Probable G-protein coupled receptor Mth-like 5 (mthl5).